Consider the following 719-residue polypeptide: Polyphosphate kinase (719 aa).

An ATP-binding site is contributed by N54. Positions 379 and 409 each coordinate Mg(2+). In terms of domain architecture, PLD phosphodiesterase spans T434–T468. The active-site Phosphohistidine intermediate is the H439. Y472, R568, and H596 together coordinate ATP.

Belongs to the polyphosphate kinase 1 (PPK1) family. Mg(2+) serves as cofactor. In terms of processing, an intermediate of this reaction is the autophosphorylated ppk in which a phosphate is covalently linked to a histidine residue through a N-P bond.

It catalyses the reaction [phosphate](n) + ATP = [phosphate](n+1) + ADP. In terms of biological role, catalyzes the reversible transfer of the terminal phosphate of ATP to form a long-chain polyphosphate (polyP). The chain is Polyphosphate kinase from Staphylococcus saprophyticus subsp. saprophyticus (strain ATCC 15305 / DSM 20229 / NCIMB 8711 / NCTC 7292 / S-41).